The chain runs to 369 residues: Actin-related protein 2/3 complex subunit 1B-A (369 aa).

WD repeat units follow at residues 6 to 45 (FLLE…WSKI), 50 to 89 (EHNG…WKPT), 94 to 135 (RINR…WVCK), 140 to 179 (PIRS…VEER), 200 to 239 (SSCG…RVTS), 242 to 282 (TDTL…LSFG), and 321 to 364 (LHKN…SAMK).

It belongs to the WD repeat ARPC1 family. In terms of assembly, component of the Arp2/3 complex composed of actr2/arp2, actr3/arp3, arpc1 (arpc1a or arpc1b), arpc2, arpc3, arpc4 and arpc5.

It localises to the cytoplasm. The protein localises to the cytoskeleton. Its subcellular location is the nucleus. Its function is as follows. Component of the Arp2/3 complex, a multiprotein complex that mediates actin polymerization upon stimulation by nucleation-promoting factor (NPF). The Arp2/3 complex mediates the formation of branched actin networks in the cytoplasm, providing the force for cell motility. In addition to its role in the cytoplasmic cytoskeleton, the Arp2/3 complex also promotes actin polymerization in the nucleus, thereby regulating gene transcription and repair of damaged DNA. The Arp2/3 complex promotes homologous recombination (HR) repair in response to DNA damage by promoting nuclear actin polymerization, leading to drive motility of double-strand breaks (DSBs). The chain is Actin-related protein 2/3 complex subunit 1B-A (arpc1b-a) from Xenopus laevis (African clawed frog).